Here is a 499-residue protein sequence, read N- to C-terminus: Myocyte-specific enhancer factor 2A (499 aa).

An MADS-box domain is found at 3 to 57 (RKKIQITRIMDERNRQVTFTKRKFGLMKKAYELSVLCDCEIALIIFNSSNKLFQY). The residue at position 4 (K4) is an N6-acetyllysine. The segment at residues 58–86 (ASTDMDKVLLKYTEYNEPHESRTNSDIVE) is a DNA-binding region (mef2-type). K117 carries the N6-acetyllysine modification. Positions 173-185 (TSTTMLSPPQTTL) are enriched in low complexity. The disordered stretch occupies residues 173–269 (TSTTMLSPPQ…GGGLGMNNRK (97 aa)). The segment covering 210 to 233 (TDLTVPNGAGTSPVGNGVWNSRAS) has biased composition (polar residues). 4 positions are modified to N6-acetyllysine: K248, K253, K269, and K281. Residues 265–282 (MNNRKPDLRVVIPPSSKG) are required for interaction with MAPKs. Positions 288 to 295 (TEEDELEL) are beta domain. A compositionally biased stretch (low complexity) spans 380 to 392 (VSGSQLSQGSNLS). The disordered stretch occupies residues 380–499 (VSGSQLSQGS…KRMRMDTWVT (120 aa)). K402 carries the post-translational modification N6-acetyllysine; alternate. K402 is covalently cross-linked (Glycyl lysine isopeptide (Lys-Gly) (interchain with G-Cter in SUMO); alternate). Pro residues predominate over residues 421-436 (QQPPQQPQPPQPPQQP). A compositionally biased stretch (low complexity) spans 445 to 458 (SPVDSLSSSSSSYD). 2 stretches are compositionally biased toward basic and acidic residues: residues 459–469 (GSDREDPRSDF) and 480–499 (NSEDRESPSVKRMRMDTWVT).

In terms of assembly, binds DNA as a homo- or heterodimer. Sumoylation on Lys-402 is enhanced by PIAS1 and represses transcriptional activity. Has no effect on nuclear location nor on DNA binding. Sumoylated by SUMO1 and, to a lesser extent by SUMO2 and SUMO3. Post-translationally, acetylation on Lys-402 activates transcriptional activity. As to expression, expressed in both embryonic and adult tissues with high expression in heart and skeletal muscle. Also expressed in gut, lung and brain of 15 dpc embryos and adults.

It is found in the nucleus. In terms of biological role, transcriptional activator which binds specifically to the MEF2 element, 5'-YTA[AT](4)TAR-3', found in numerous muscle-specific genes. Mediates cellular functions in skeletal and cardiac muscle development,. This Gallus gallus (Chicken) protein is Myocyte-specific enhancer factor 2A (MEF2A).